Reading from the N-terminus, the 185-residue chain is Pyruvate/ketoisovalerate oxidoreductases common subunit gamma (185 aa).

Heterotetramer of one alpha, one beta, one delta and one gamma chain.

The enzyme catalyses 2 oxidized [2Fe-2S]-[ferredoxin] + pyruvate + CoA = 2 reduced [2Fe-2S]-[ferredoxin] + acetyl-CoA + CO2 + H(+). It carries out the reaction 3-methyl-2-oxobutanoate + 2 oxidized [2Fe-2S]-[ferredoxin] + CoA = 2-methylpropanoyl-CoA + 2 reduced [2Fe-2S]-[ferredoxin] + CO2 + H(+). This is Pyruvate/ketoisovalerate oxidoreductases common subunit gamma (porG) from Pyrococcus furiosus (strain ATCC 43587 / DSM 3638 / JCM 8422 / Vc1).